The following is a 457-amino-acid chain: Bifunctional protein GlmU (457 aa).

Residues 1-230 (MPLSLPLHIV…AQEVEGVNDL (230 aa)) form a pyrophosphorylase region. UDP-N-acetyl-alpha-D-glucosamine contacts are provided by residues 12–15 (LAAG), lysine 26, glutamine 78, 83–84 (GT), 105–107 (YGD), glycine 140, glutamate 155, asparagine 170, and asparagine 228. Aspartate 107 is a binding site for Mg(2+). Asparagine 228 provides a ligand contact to Mg(2+). Residues 231 to 251 (WQLTQLERAWQIRAARALCLQ) form a linker region. The tract at residues 252–457 (GARVADPARL…DGWQRPKKKT (206 aa)) is N-acetyltransferase. 2 residues coordinate UDP-N-acetyl-alpha-D-glucosamine: arginine 334 and lysine 352. The Proton acceptor role is filled by histidine 364. UDP-N-acetyl-alpha-D-glucosamine contacts are provided by tyrosine 367 and asparagine 378. Residues alanine 381, 387–388 (NY), serine 406, alanine 424, and arginine 441 contribute to the acetyl-CoA site.

The protein in the N-terminal section; belongs to the N-acetylglucosamine-1-phosphate uridyltransferase family. In the C-terminal section; belongs to the transferase hexapeptide repeat family. Homotrimer. Mg(2+) serves as cofactor.

It localises to the cytoplasm. The catalysed reaction is alpha-D-glucosamine 1-phosphate + acetyl-CoA = N-acetyl-alpha-D-glucosamine 1-phosphate + CoA + H(+). It catalyses the reaction N-acetyl-alpha-D-glucosamine 1-phosphate + UTP + H(+) = UDP-N-acetyl-alpha-D-glucosamine + diphosphate. The protein operates within nucleotide-sugar biosynthesis; UDP-N-acetyl-alpha-D-glucosamine biosynthesis; N-acetyl-alpha-D-glucosamine 1-phosphate from alpha-D-glucosamine 6-phosphate (route II): step 2/2. Its pathway is nucleotide-sugar biosynthesis; UDP-N-acetyl-alpha-D-glucosamine biosynthesis; UDP-N-acetyl-alpha-D-glucosamine from N-acetyl-alpha-D-glucosamine 1-phosphate: step 1/1. It functions in the pathway bacterial outer membrane biogenesis; LPS lipid A biosynthesis. In terms of biological role, catalyzes the last two sequential reactions in the de novo biosynthetic pathway for UDP-N-acetylglucosamine (UDP-GlcNAc). The C-terminal domain catalyzes the transfer of acetyl group from acetyl coenzyme A to glucosamine-1-phosphate (GlcN-1-P) to produce N-acetylglucosamine-1-phosphate (GlcNAc-1-P), which is converted into UDP-GlcNAc by the transfer of uridine 5-monophosphate (from uridine 5-triphosphate), a reaction catalyzed by the N-terminal domain. The chain is Bifunctional protein GlmU from Xylella fastidiosa (strain M23).